The following is a 468-amino-acid chain: Argininosuccinate lyase (468 aa).

It belongs to the lyase 1 family. Argininosuccinate lyase subfamily.

It localises to the cytoplasm. It carries out the reaction 2-(N(omega)-L-arginino)succinate = fumarate + L-arginine. It participates in amino-acid biosynthesis; L-arginine biosynthesis; L-arginine from L-ornithine and carbamoyl phosphate: step 3/3. This Cutibacterium acnes (strain DSM 16379 / KPA171202) (Propionibacterium acnes) protein is Argininosuccinate lyase.